A 212-amino-acid polypeptide reads, in one-letter code: Phosphatidylserine decarboxylase proenzyme (212 aa).

Catalysis depends on S182, which acts as the Schiff-base intermediate with substrate; via pyruvic acid. S182 carries the pyruvic acid (Ser); by autocatalysis modification.

This sequence belongs to the phosphatidylserine decarboxylase family. PSD-A subfamily. In terms of assembly, heterodimer of a large membrane-associated beta subunit and a small pyruvoyl-containing alpha subunit. The cofactor is pyruvate. Is synthesized initially as an inactive proenzyme. Formation of the active enzyme involves a self-maturation process in which the active site pyruvoyl group is generated from an internal serine residue via an autocatalytic post-translational modification. Two non-identical subunits are generated from the proenzyme in this reaction, and the pyruvate is formed at the N-terminus of the alpha chain, which is derived from the carboxyl end of the proenzyme. The post-translation cleavage follows an unusual pathway, termed non-hydrolytic serinolysis, in which the side chain hydroxyl group of the serine supplies its oxygen atom to form the C-terminus of the beta chain, while the remainder of the serine residue undergoes an oxidative deamination to produce ammonia and the pyruvoyl prosthetic group on the alpha chain.

It localises to the cell membrane. The catalysed reaction is a 1,2-diacyl-sn-glycero-3-phospho-L-serine + H(+) = a 1,2-diacyl-sn-glycero-3-phosphoethanolamine + CO2. The protein operates within phospholipid metabolism; phosphatidylethanolamine biosynthesis; phosphatidylethanolamine from CDP-diacylglycerol: step 2/2. Catalyzes the formation of phosphatidylethanolamine (PtdEtn) from phosphatidylserine (PtdSer). This chain is Phosphatidylserine decarboxylase proenzyme, found in Chlorobium limicola (strain DSM 245 / NBRC 103803 / 6330).